The primary structure comprises 217 residues: UPF0711 protein C18orf21 homolog (217 aa).

A Phosphoserine modification is found at serine 126. 2 positions are modified to phosphothreonine: threonine 130 and threonine 139. Residues 131 to 190 (AANKASPKTPKRTAPGSANLGQSTNGSKGKSPSLTIRTPTSGQSTPICSSRNGSKRKKHF) are disordered. The segment covering 149-182 (NLGQSTNGSKGKSPSLTIRTPTSGQSTPICSSRN) has biased composition (polar residues).

This sequence belongs to the UPF0711 family.

The chain is UPF0711 protein C18orf21 homolog from Mus musculus (Mouse).